The sequence spans 501 residues: Glycine betaine/proline/ectoine/pipecolic acid transporter OusA (501 aa).

Residues 1–38 (MKLKRKRVKPIALDDVTIIDDGRLRKAITAAALGNAME) are Cytoplasmic-facing. A helical membrane pass occupies residues 39 to 59 (WFDFGVYGFVAYALGQVFFPG). Topologically, residues 60–66 (ADPGVQM) are periplasmic. Residues 67–87 (IAALATFSVPFLIRPLGGVFF) traverse the membrane as a helical segment. The Cytoplasmic portion of the chain corresponds to 88-98 (GALGDKYGRQK). The chain crosses the membrane as a helical span at residues 99–119 (ILAITIIIMSISTFCIGLIPS). Over 120-122 (YER) the chain is Periplasmic. A helical transmembrane segment spans residues 123–143 (IGIWAPILLLLAKMAQGFSVG). Over 144 to 170 (GEYTGASIFVAEYSPDRKRGFMGSWLD) the chain is Cytoplasmic. The chain crosses the membrane as a helical span at residues 171–191 (FGSIAGFVLGAGVVVLISTLI). At 192 to 195 (GEQA) the chain is on the periplasmic side. Residues 196 to 216 (FLAWGWRLPFFLALPLGLIGL) traverse the membrane as a helical segment. Residues 217–261 (YLRHALEETPAFRQHVEKLEQNDRDGLKAGPGVSFREIATHHWKS) lie on the Cytoplasmic side of the membrane. The chain crosses the membrane as a helical span at residues 262 to 282 (LLVCIGLVIATNVTYYMLLTY). Topologically, residues 283-298 (MPSYLSHSLHYSENHG) are periplasmic. Residues 299–319 (VLIIIAIMIGMLFVQPVMGLL) traverse the membrane as a helical segment. Over 320 to 326 (SDRFGRK) the chain is Cytoplasmic. The chain crosses the membrane as a helical span at residues 327-347 (PFVVIGSVAMFFLAVPSFMLI). Topologically, residues 348–350 (NSD) are periplasmic. A helical transmembrane segment spans residues 351–371 (IIGLIFLGLLMLAVILNAFTG). Over 372-391 (VMASTLPALFPTHIRYSALA) the chain is Cytoplasmic. A helical transmembrane segment spans residues 392–412 (SAFNISVLIAGLTPTVAAWLV). Residues 413 to 417 (ESSQN) lie on the Periplasmic side of the membrane. A helical membrane pass occupies residues 418-438 (LYMPAYYLMVIAVIGLLTGLF). The Cytoplasmic segment spans residues 439–501 (MKETANKPLK…LVAQHPRIND (63 aa)). A coiled-coil region spans residues 461-495 (KEILQEHHDNIEHKIEDITQQIAELEAKRQLLVAQ).

Belongs to the major facilitator superfamily. Sugar transporter (TC 2.A.1.1) family.

Its subcellular location is the cell inner membrane. Its function is as follows. Involved in uptake and accumulation of various osmoprotectants. Allows the uptake of glycine betaine, proline, ectoine, and pipecolic acid. May be a contributory factor in the infection progression within the host. This Dickeya dadantii (strain 3937) (Erwinia chrysanthemi (strain 3937)) protein is Glycine betaine/proline/ectoine/pipecolic acid transporter OusA.